Consider the following 616-residue polypeptide: Sialic acid TRAP transporter permease protein SiaT (616 aa).

The TRAP transporter small permease stretch occupies residues 1-190 (MKYINKLEEW…RISNYIKLGS (190 aa)). 17 helical membrane passes run 9–29 (EWLG…QILS), 36–56 (PLIW…MLGI), 83–103 (TNTF…HFGI), 117–137 (GGIS…LMMF), 153–173 (YLPA…LFFA), 195–215 (IALL…WSLF), 244–264 (FPLL…TGGI), 288–308 (IGAS…AGGL), 332–352 (ASCI…YGVI), 357–377 (IAKL…ALMA), 407–427 (FWAI…LFSP), 431–451 (AIVA…ELTL), 459–479 (IEAM…TFFG), 505–525 (VLVM…ALAL), 527–547 (FLVL…LIFF), 552–572 (TLNM…FVVA), and 587–607 (LPFL…PQII). Residues 191–616 (SSVYIALLVW…ITFVPNLLIP (426 aa)) form a TRAP transporter large permease region.

The protein in the N-terminal section; belongs to the TRAP transporter small permease family. This sequence in the C-terminal section; belongs to the TRAP transporter large permease family. In terms of assembly, the complex comprises the extracytoplasmic solute receptor protein SiaP, and the fused transmembrane protein SiaT.

It localises to the cell inner membrane. Functionally, part of the tripartite ATP-independent periplasmic (TRAP) transport system SiaPT involved in the uptake of sialic acid. The protein is Sialic acid TRAP transporter permease protein SiaT (siaT) of Haemophilus influenzae (strain 86-028NP).